We begin with the raw amino-acid sequence, 582 residues long: Potassium-transporting ATPase potassium-binding subunit (582 aa).

11 consecutive transmembrane segments (helical) span residues 6–26, 65–85, 87–107, 136–156, 178–198, 277–297, 304–324, 402–422, 441–461, 505–525, and 546–566; these read LVQLLFFLSVLLVLSWPLGLY, IYALVMLGLNAFGMVFVYVLE, LQGGLPLNPLHLPGVDPFVAV, GLAVQNFLSAATGMAVAVALI, VLYILLPLSFVLALLLVWQGV, LEMLAILLIPAALCHTFGVMI, LAILAAMTILFAGFAALTLAA, GLYGMLVFAVVTVFVAGLMVG, ALVILIPPFLCLAGTALAAVI, IAGAVAMFVSRYWLIVPVLAL, and GGIFVALLIIVVLVVGALTFV.

It belongs to the KdpA family. The system is composed of three essential subunits: KdpA, KdpB and KdpC.

It localises to the cell inner membrane. Its function is as follows. Part of the high-affinity ATP-driven potassium transport (or Kdp) system, which catalyzes the hydrolysis of ATP coupled with the electrogenic transport of potassium into the cytoplasm. This subunit binds the periplasmic potassium ions and delivers the ions to the membrane domain of KdpB through an intramembrane tunnel. The polypeptide is Potassium-transporting ATPase potassium-binding subunit (Solidesulfovibrio magneticus (strain ATCC 700980 / DSM 13731 / RS-1) (Desulfovibrio magneticus)).